The chain runs to 287 residues: NAD kinase (287 aa).

The Proton acceptor role is filled by D56. NAD(+) is bound by residues 56–57 (DG), R61, 128–129 (ND), and D156.

It belongs to the NAD kinase family. Requires a divalent metal cation as cofactor.

It is found in the cytoplasm. It carries out the reaction NAD(+) + ATP = ADP + NADP(+) + H(+). In terms of biological role, involved in the regulation of the intracellular balance of NAD and NADP, and is a key enzyme in the biosynthesis of NADP. Catalyzes specifically the phosphorylation on 2'-hydroxyl of the adenosine moiety of NAD to yield NADP. The sequence is that of NAD kinase from Thermomicrobium roseum (strain ATCC 27502 / DSM 5159 / P-2).